Consider the following 807-residue polypeptide: MYSSSRKRCPKTKWALKLLTAAFLAASPAAKSAVNNAYDALIIEARKGNTQPALSWFALKSALSNNQIADWLQIALWAGQDKQVITVYNRYRHQQLPARGYAAVAVAYRNLQQWQNSLTLWQKALSLEPQNKDYQRGQILTLADAGHYDTALVKLKQLNSGAPDKANLLAEAYIYKLAGRHQDELRAMTESLPENASTQQYPTEYVQALRNNQLAAAIDDANLTPDIRADIHAELVRLSFMPTRSESERYAIADRALAQYAALEILWHDNPDRTAQYQRIQVDHLGALLTRDRYKDVISHYQRLKKTGQIIPPWGQYWVASAYLKDHQPKKAQSIMTELFYHKETIAPDLSDEELADLFYSHLESENYPGALTVTQHTINTSPPFLRLMGTPTSIPNDTWLQGHSFLSTVAKYSNDLPQAEMTARELAYNAPGNQGLRIDYASVLQARGWPRAAENELKKAEVIEPRNINLEVEQAWTALTLQEWQQAAVLTHDVVEREPQDPGVVRLKRAVDVHNLAELRIAGSTGIDAEGPDSGKHDVDLTTIVYSPPLKDNWRGFAGFGYADGQFSEGKGIVRDWLAGVEWRSRNIWLEAEYAERVFNHEHKPGARLSGWYDFNDNWRIGSQLERLSHRVPLRAMKNGVTGNSAQAYVRWYQNERRKYGVSWAFTDFSDSNQRHEVSLEGQERIWSSPYLIVDFLPSLYYEQNTEHDTPYYNPIKTFDIVPAFEASHLLWRSYENSWEQIFSAGVGASWQKHYGTDVVTQLGYGQRISWNDVIDAGATLRWEKRPYDGDREHNLYVEFDMTFRF.

Residues 1-26 (MYSSSRKRCPKTKWALKLLTAAFLAA) form the signal peptide. TPR repeat units follow at residues 98-131 (ARGYAAVAVAYRNLQQWQNSLTLWQKALSLEPQN), 165-198 (KANLLAEAYIYKLAGRHQDELRAMTESLPENAST), and 279-311 (RIQVDHLGALLTRDRYKDVISHYQRLKKTGQII).

The protein resides in the cell outer membrane. Exports the biofilm adhesin polysaccharide poly-beta-1,6-N-acetyl-D-glucosamine (PGA) across the outer membrane. The PGA transported seems to be partially N-deacetylated since N-deacetylation of PGA by PgaB is needed for PGA export through the PgaA porin. This Escherichia coli O157:H7 protein is Poly-beta-1,6-N-acetyl-D-glucosamine export protein (pgaA).